Here is a 398-residue protein sequence, read N- to C-terminus: Serine/threonine-protein phosphatase 4 regulatory subunit 2-B (398 aa).

A disordered region spans residues 138–398 (SSEKNTSPSL…NAPEEPMEQD (261 aa)). 3 stretches are compositionally biased toward polar residues: residues 139 to 149 (SEKNTSPSLNR), 156 to 170 (PSNS…NVNG), and 183 to 193 (TLSSPMNTNGL). Positions 197–211 (MENKESDLQQKEKSL) are enriched in basic and acidic residues. The segment covering 278-294 (ASTSADKGKESCQTAQT) has biased composition (polar residues). The span at 338–366 (SESACSLNSEEPNSAAAAASTAGTDSSEG) shows a compositional bias: low complexity.

This sequence belongs to the PPP4R2 family. In terms of assembly, serine/threonine-protein phosphatase 4 (PP4) occurs in different assemblies of the catalytic and one or more regulatory subunits.

In terms of biological role, regulatory subunit of serine/threonine-protein phosphatase 4 (PP4). This is Serine/threonine-protein phosphatase 4 regulatory subunit 2-B (ppp4r2-b) from Xenopus laevis (African clawed frog).